Consider the following 377-residue polypeptide: tRNA-specific 2-thiouridylase MnmA (377 aa).

ATP-binding positions include 8–15 and M34; that span reads GMSGGVDS. An interaction with target base in tRNA region spans residues 94-96; it reads NPD. The Nucleophile role is filled by C99. C99 and C201 are joined by a disulfide. G123 is a binding site for ATP. The interaction with tRNA stretch occupies residues 151-153; that stretch reads KDQ. The active-site Cysteine persulfide intermediate is C201. The interaction with tRNA stretch occupies residues 315–316; it reads RY.

Belongs to the MnmA/TRMU family.

Its subcellular location is the cytoplasm. The catalysed reaction is S-sulfanyl-L-cysteinyl-[protein] + uridine(34) in tRNA + AH2 + ATP = 2-thiouridine(34) in tRNA + L-cysteinyl-[protein] + A + AMP + diphosphate + H(+). Its function is as follows. Catalyzes the 2-thiolation of uridine at the wobble position (U34) of tRNA, leading to the formation of s(2)U34. In Acinetobacter baylyi (strain ATCC 33305 / BD413 / ADP1), this protein is tRNA-specific 2-thiouridylase MnmA.